The sequence spans 531 residues: MSVDPKKLNKEVAKRRTFAIISHPDAGKTTMTEKLLLWGKAIQVVGEVKGRKTDRHATSDWMSMEQERGISITTSVMQFPYKEHMVNLLDTPGHADFSEDTYRTLTAVDSALMMVDGAKGVEERTIKLMEVCRMRDTPIISFVNKLDRQIREPLELLSEIEAVLKIKCIPVTWPIGMGQDFVGVYHLTENKTYFYEKGHGGDMTVAETREGYDYPDIRERLGALMFASFEESLELVQMALEDFDVDEFLAGEMTPVLFGTALGNFGVNMVLDTLIKYAPPPKAHPTNEREVAATETTFSGFVFKIQANMDPRHRDRIAFLRVCSGKYEKGMKLKHVRLGKDVRIADALTFLAGDREALEEAYPGDIIGLHNHGTISIGDSFTEGEELNFTGIPHFAPELFRRVILKDPLKSKALQKGLQQLSEEGATQVFMPQINNDLILGAVGVLQFEVVAHRLKEEYKVQCIFEPVSIATVRWIHCDDEVALAKFKRKAHDQLSLDGGGHLTYLAPSRVNLQLMQDRYPEVTFSNTREH.

The 270-residue stretch at 13–282 (AKRRTFAIIS…TLIKYAPPPK (270 aa)) folds into the tr-type G domain. Residues 22–29 (SHPDAGKT), 90–94 (DTPGH), and 144–147 (NKLD) each bind GTP.

Belongs to the TRAFAC class translation factor GTPase superfamily. Classic translation factor GTPase family. PrfC subfamily.

It is found in the cytoplasm. Functionally, increases the formation of ribosomal termination complexes and stimulates activities of RF-1 and RF-2. It binds guanine nucleotides and has strong preference for UGA stop codons. It may interact directly with the ribosome. The stimulation of RF-1 and RF-2 is significantly reduced by GTP and GDP, but not by GMP. In Psychrobacter cryohalolentis (strain ATCC BAA-1226 / DSM 17306 / VKM B-2378 / K5), this protein is Peptide chain release factor 3.